Consider the following 252-residue polypeptide: 3-deoxy-manno-octulosonate cytidylyltransferase (252 aa).

The protein belongs to the KdsB family.

Its subcellular location is the cytoplasm. The enzyme catalyses 3-deoxy-alpha-D-manno-oct-2-ulosonate + CTP = CMP-3-deoxy-beta-D-manno-octulosonate + diphosphate. It functions in the pathway nucleotide-sugar biosynthesis; CMP-3-deoxy-D-manno-octulosonate biosynthesis; CMP-3-deoxy-D-manno-octulosonate from 3-deoxy-D-manno-octulosonate and CTP: step 1/1. The protein operates within bacterial outer membrane biogenesis; lipopolysaccharide biosynthesis. In terms of biological role, activates KDO (a required 8-carbon sugar) for incorporation into bacterial lipopolysaccharide in Gram-negative bacteria. The protein is 3-deoxy-manno-octulosonate cytidylyltransferase of Thiobacillus denitrificans (strain ATCC 25259 / T1).